A 161-amino-acid chain; its full sequence is MAAEILEVADLPARVGPRQRLIGIDLGTKTIGLALSDVERRIATPLETIQRIKFSKDAVRLIELAEKFDAGALIIGLPLNMDGSQGPRVQATRAFVRSLSALVSKPFVYWDERLSTAAVTRSLIDQDVSRLKRAEVVDKMAAAYILQGVLDRLRRIEADAV.

Belongs to the YqgF nuclease family.

Its subcellular location is the cytoplasm. Its function is as follows. Could be a nuclease involved in processing of the 5'-end of pre-16S rRNA. This chain is Putative pre-16S rRNA nuclease, found in Methylocella silvestris (strain DSM 15510 / CIP 108128 / LMG 27833 / NCIMB 13906 / BL2).